The primary structure comprises 265 residues: Interleukin-1 alpha (265 aa).

Residues 1-108 (MAKVPDLFED…DTEEVIMKPR (108 aa)) constitute a propeptide that is removed on maturation. An N6-acetyllysine modification is found at Lys-78. Residues 78-82 (KKRRL) form a nuclear localization signal (NLS) region. A Phosphoserine modification is found at Ser-83. 2 N-linked (GlcNAc...) asparagine glycosylation sites follow: Asn-98 and Asn-137.

It belongs to the IL-1 family. In terms of assembly, monomer. Interacts with TMED10; the interaction mediates the translocation from the cytoplasm into the ERGIC (endoplasmic reticulum-Golgi intermediate compartment) and thereby secretion. Interacts with IL1R1. Interacts with S100A13; this interaction is the first step in the export of IL1A, followed by direct translocation of this complex across the plasma membrane. Post-translationally, acetylated within its nuclear localization sequence, which impacts subcellular localization. Proteolytic processed by CAPN1 in a calcium-dependent manner. Cleavage from 31 kDa precursor to 18 kDa biologically active molecules. In terms of processing, phosphorylated. Phosphorylation greatly enhances susceptibility to digestion and promotes the conversion of pre-IL1A alpha to the biologically active IL1A.

It localises to the nucleus. The protein localises to the cytoplasm. It is found in the secreted. Functionally, cytokine constitutively present intracellularly in nearly all resting non-hematopoietic cells that plays an important role in inflammation and bridges the innate and adaptive immune systems. After binding to its receptor IL1R1 together with its accessory protein IL1RAP, forms the high affinity interleukin-1 receptor complex. Signaling involves the recruitment of adapter molecules such as MYD88, IRAK1 or IRAK4. In turn, mediates the activation of NF-kappa-B and the three MAPK pathways p38, p42/p44 and JNK pathways. Within the cell, acts as an alarmin and cell death results in its liberation in the extracellular space after disruption of the cell membrane to induce inflammation and alert the host to injury or damage. In addition to its role as a danger signal, which occurs when the cytokine is passively released by cell necrosis, directly senses DNA damage and acts as signal for genotoxic stress without loss of cell integrity. This is Interleukin-1 alpha (IL1A) from Canis lupus familiaris (Dog).